The primary structure comprises 143 residues: Nucleoside diphosphate kinase (143 aa).

Lysine 11, phenylalanine 59, arginine 87, threonine 93, arginine 104, and asparagine 114 together coordinate ATP. The Pros-phosphohistidine intermediate role is filled by histidine 117.

The protein belongs to the NDK family. In terms of assembly, homotetramer. Mg(2+) is required as a cofactor.

The protein resides in the cytoplasm. The catalysed reaction is a 2'-deoxyribonucleoside 5'-diphosphate + ATP = a 2'-deoxyribonucleoside 5'-triphosphate + ADP. It catalyses the reaction a ribonucleoside 5'-diphosphate + ATP = a ribonucleoside 5'-triphosphate + ADP. Major role in the synthesis of nucleoside triphosphates other than ATP. The ATP gamma phosphate is transferred to the NDP beta phosphate via a ping-pong mechanism, using a phosphorylated active-site intermediate. This chain is Nucleoside diphosphate kinase, found in Citrobacter koseri (strain ATCC BAA-895 / CDC 4225-83 / SGSC4696).